A 299-amino-acid chain; its full sequence is tRNA pseudouridine synthase B (299 aa).

The active-site Nucleophile is the Asp-47.

Belongs to the pseudouridine synthase TruB family. Type 1 subfamily.

It carries out the reaction uridine(55) in tRNA = pseudouridine(55) in tRNA. Responsible for synthesis of pseudouridine from uracil-55 in the psi GC loop of transfer RNAs. In Dechloromonas aromatica (strain RCB), this protein is tRNA pseudouridine synthase B.